A 208-amino-acid polypeptide reads, in one-letter code: Uracil phosphoribosyltransferase (208 aa).

5-phospho-alpha-D-ribose 1-diphosphate-binding positions include R78, R103, and 130-138 (DPMLATGGS). Residues I193 and 198-200 (GDA) contribute to the uracil site. Residue D199 coordinates 5-phospho-alpha-D-ribose 1-diphosphate.

The protein belongs to the UPRTase family. Mg(2+) is required as a cofactor.

The catalysed reaction is UMP + diphosphate = 5-phospho-alpha-D-ribose 1-diphosphate + uracil. Its pathway is pyrimidine metabolism; UMP biosynthesis via salvage pathway; UMP from uracil: step 1/1. Allosterically activated by GTP. Functionally, catalyzes the conversion of uracil and 5-phospho-alpha-D-ribose 1-diphosphate (PRPP) to UMP and diphosphate. In Photobacterium profundum (strain SS9), this protein is Uracil phosphoribosyltransferase.